The chain runs to 59 residues: Early growth response protein 1 (59 aa).

3 C2H2-type zinc fingers span residues 1 to 18 (CDRRFSRSDELTRHIRIH), 24 to 46 (FQCRICMRNFSRSDHLTTHIRTH), and 52 to 59 (FACDICGR).

This sequence belongs to the EGR C2H2-type zinc-finger protein family.

It is found in the nucleus. The protein resides in the cytoplasm. In terms of biological role, transcriptional regulator. Recognizes and binds to the DNA sequence 5'-GCG(T/G)GGGCG-3'(EGR-site) in the promoter region of target genes. Binds double-stranded target DNA, irrespective of the cytosine methylation status. Regulates the transcription of numerous target genes, and thereby plays an important role in regulating the response to growth factors, DNA damage, and ischemia. Plays a role in the regulation of cell survival, proliferation and cell death. Mediates responses to ischemia and hypoxia; regulates the expression of proteins that are involved in inflammatory processes. Plays a role in regulating the expression of circadian clock genes. The polypeptide is Early growth response protein 1 (EGR1) (Serinus canaria (Island canary)).